We begin with the raw amino-acid sequence, 334 residues long: Nucleoid-associated protein plu2870 (334 aa).

This sequence belongs to the YejK family.

It localises to the cytoplasm. The protein localises to the nucleoid. The chain is Nucleoid-associated protein plu2870 from Photorhabdus laumondii subsp. laumondii (strain DSM 15139 / CIP 105565 / TT01) (Photorhabdus luminescens subsp. laumondii).